The primary structure comprises 199 residues: 7-methyl-GTP pyrophosphatase (199 aa).

Catalysis depends on Asp76, which acts as the Proton acceptor.

Belongs to the Maf family. YceF subfamily. The cofactor is a divalent metal cation.

The protein localises to the cytoplasm. It catalyses the reaction N(7)-methyl-GTP + H2O = N(7)-methyl-GMP + diphosphate + H(+). Nucleoside triphosphate pyrophosphatase that hydrolyzes 7-methyl-GTP (m(7)GTP). May have a dual role in cell division arrest and in preventing the incorporation of modified nucleotides into cellular nucleic acids. This is 7-methyl-GTP pyrophosphatase from Mesorhizobium japonicum (strain LMG 29417 / CECT 9101 / MAFF 303099) (Mesorhizobium loti (strain MAFF 303099)).